The primary structure comprises 105 residues: Unclassified hydrophobin D (105 aa).

A signal peptide spans Met1–Ala18. Disulfide bonds link Cys35-Cys86, Cys42-Cys83, and Cys43-Cys49.

Its subcellular location is the secreted. The protein resides in the cell wall. In terms of biological role, aerial growth, conidiation, and dispersal of filamentous fungi in the environment rely upon a capability of their secreting small amphipathic proteins called hydrophobins (HPBs) with low sequence identity. Class I can self-assemble into an outermost layer of rodlet bundles on aerial cell surfaces, conferring cellular hydrophobicity that supports fungal growth, development and dispersal; whereas Class II form highly ordered films at water-air interfaces through intermolecular interactions but contribute nothing to the rodlet structure. In P.expansum, hydrophobins contribute to germination, tolerance to cold stress and mycotoxins patulin and citrinin production. The polypeptide is Unclassified hydrophobin D (Penicillium expansum (Blue mold rot fungus)).